Here is a 165-residue protein sequence, read N- to C-terminus: MKSVITTVVGAADSASRFPSASDMESVQGSIQRAAARLEAAEKLSANYDAIAQRAVDAVYAQYPNGATGRQPRQCATEGKEKCKRDFVHYLRLINYCLVTGGTGPLDELAINGQKEVYKALSIDAGTYVAGFSNMRNDGCSPRDMSAQALTAYNTLLDYVINSLG.

Cys-75 is a phycourobilin binding site. Residues Cys-83 and Cys-140 each coordinate (2R,3E)-phycoerythrobilin.

It belongs to the phycobiliprotein family. In terms of assembly, heterodimer of an alpha and a beta chain. Post-translationally, contains two covalently linked phycoerythrobilin chromophores and one covalently linked phycourobilin chromophore.

Its subcellular location is the cellular thylakoid membrane. Its function is as follows. Light-harvesting photosynthetic bile pigment-protein from the phycobiliprotein complex. This Synechococcus sp. (strain WH8020) protein is C-phycoerythrin class 2 subunit alpha (mpeA).